We begin with the raw amino-acid sequence, 192 residues long: dTTP/UTP pyrophosphatase (192 aa).

The active-site Proton acceptor is the D75.

This sequence belongs to the Maf family. YhdE subfamily. A divalent metal cation is required as a cofactor.

The protein resides in the cytoplasm. The enzyme catalyses dTTP + H2O = dTMP + diphosphate + H(+). It catalyses the reaction UTP + H2O = UMP + diphosphate + H(+). Functionally, nucleoside triphosphate pyrophosphatase that hydrolyzes dTTP and UTP. May have a dual role in cell division arrest and in preventing the incorporation of modified nucleotides into cellular nucleic acids. The chain is dTTP/UTP pyrophosphatase from Pelodictyon phaeoclathratiforme (strain DSM 5477 / BU-1).